The chain runs to 355 residues: Squamosa promoter-binding protein-like 15 (355 aa).

A disordered region spans residues 1–27 (MELLKGSGLNQTESGGSSSTESSSLSG). A compositionally biased stretch (low complexity) spans 12-27 (TESGGSSSTESSSLSG). Residues 61–138 (TARCQVEGCR…ACHNERRRKP (78 aa)) form an SBP-type zinc finger. Zn(2+) contacts are provided by C64, C69, C86, H89, C105, C108, H112, and C124. Positions 121-137 (KRSCRRRLACHNERRRK) match the Bipartite nuclear localization signal motif.

Its subcellular location is the nucleus. Functionally, probable transcription factor required for the flowering response to vernalization in the shoot apical meristem (SAM). Defines the competence of shoot meristems to flower in response to vernalization in perennials. This chain is Squamosa promoter-binding protein-like 15, found in Arabis alpina (Alpine rock-cress).